We begin with the raw amino-acid sequence, 1023 residues long: Sodium/potassium-transporting ATPase subunit alpha-1 (1023 aa).

A propeptide spanning residues 1–5 (MGKGV) is cleaved from the precursor. Over residues 1-11 (MGKGVGRDKYE) the composition is skewed to basic and acidic residues. Positions 1-39 (MGKGVGRDKYEPAAVSEQGDKKGKKGKKDRDMDELKKEV) are disordered. At 6-87 (GRDKYEPAAV…NALTPPPTTP (82 aa)) the chain is on the cytoplasmic side. Lysine 9 bears the N6-acetyllysine mark. Residue tyrosine 10 is modified to Phosphotyrosine. Serine 16 carries the phosphoserine modification. Lysine 21 is modified (N6-acetyllysine). Residues 28–39 (KDRDMDELKKEV) are compositionally biased toward basic and acidic residues. Phosphoserine occurs at positions 40 and 47. Residues 82 to 84 (PPP) form a phosphoinositide-3 kinase binding region. Residues 88–108 (EWIKFCRQLFGGFSMLLWIGA) traverse the membrane as a helical segment. Topologically, residues 109 to 131 (ILCFLAYSIQAATEEEPQNDNLY) are extracellular. A helical membrane pass occupies residues 132 to 152 (LGVVLSAVVIITGCFSYYQEA). Residues 153 to 288 (KSSKIMESFK…GGQTPIAAEI (136 aa)) are Cytoplasmic-facing. Residues 216-235 (SSLTGESEPQTRSPDFTNEN) are disordered. The residue at position 228 (serine 228) is a Phosphoserine. A Phosphotyrosine modification is found at tyrosine 260. A helical transmembrane segment spans residues 289-308 (EHFIHIITGVAVFLGVSFFI). Residues 309–320 (LSLILEYTWLEA) are Extracellular-facing. Residues 321-338 (VIFLIGIIVANVPEGLLA) traverse the membrane as a helical segment. Residues 339–772 (TVTVCLTLTA…EEGRLIFDNL (434 aa)) are Cytoplasmic-facing. The active-site 4-aspartylphosphate intermediate is the aspartate 376. Phosphoserine is present on residues serine 452 and serine 484. Position 487 (lysine 487) interacts with ATP. Tyrosine 542 is modified (phosphotyrosine). The segment at 596 to 717 (RAAVPDAVGK…QGAIVAVTGD (122 aa)) is mediates interaction with SCN7A. Position 661 is an N6-succinyllysine (lysine 661). Phosphoserine is present on residues serine 668 and serine 675. Mg(2+)-binding residues include aspartate 717 and aspartate 721. Residues 773–792 (KKSIAYTLTSNIPEITPFLI) form a helical membrane-spanning segment. Over 793–802 (FIIANIPLPL) the chain is Extracellular. Residues 803-823 (GTVTILCIDLGTDMVPAISLA) traverse the membrane as a helical segment. The Cytoplasmic portion of the chain corresponds to 824–843 (YEQAESDIMKRQPRNPKTDK). Residues 844 to 866 (LVNERLISMAYGQIGMIQALGGF) form a helical membrane-spanning segment. Over 867 to 918 (FTYFVILAENGFLPIHLLGLRVDWDDRWINDVEDSYGQQWTYEQRKIVEFTC) the chain is Extracellular. Residues 919 to 938 (HTAFFVSIVVVQWADLVICK) form a helical membrane-spanning segment. Over 939–951 (TRRNSVFQQGMKN) the chain is Cytoplasmic. Serine 943 bears the Phosphoserine; by PKA mark. A helical transmembrane segment spans residues 952-970 (KILIFGLFEETALAAFLSY). Residues 971-985 (CPGMGVALRMYPLKP) are Extracellular-facing. A helical membrane pass occupies residues 986–1006 (TWWFCAFPYSLLIFVYDEVRK). Residues 1007-1023 (LIIRRRPGGWVEKETYY) are Cytoplasmic-facing.

The protein belongs to the cation transport ATPase (P-type) (TC 3.A.3) family. Type IIC subfamily. As to quaternary structure, the sodium/potassium-transporting ATPase is composed of a catalytic alpha subunit, an auxiliary non-catalytic beta subunit and an additional regulatory subunit. Interacts with regulatory subunit FXYD1. Interacts with regulatory subunit FXYD3. Interacts with SIK1. Binds the HLA class II histocompatibility antigen DR1. Interacts with SLC35G1 and STIM1. Interacts with CLN3; this interaction regulates the sodium/potassium-transporting ATPase complex localization at the plasma membrane. Interacts with SCN7A; activates ATP1A1 P-type sodium:potassium-exchanging transporter activity which indirectly signals to nearby neurons to regulate sodium homeostasis. Phosphorylation on Tyr-10 modulates pumping activity. Phosphorylation of Ser-943 by PKA modulates the response of ATP1A1 to PKC. Dephosphorylation by protein phosphatase 2A (PP2A) following increases in intracellular sodium, leading to increase catalytic activity.

Its subcellular location is the cell membrane. It is found in the basolateral cell membrane. The protein localises to the sarcolemma. It localises to the cell projection. The protein resides in the axon. Its subcellular location is the melanosome. The enzyme catalyses K(+)(out) + Na(+)(in) + ATP + H2O = K(+)(in) + Na(+)(out) + ADP + phosphate + H(+). This is the catalytic component of the active enzyme, which catalyzes the hydrolysis of ATP coupled with the exchange of sodium and potassium ions across the plasma membrane. This action creates the electrochemical gradient of sodium and potassium ions, providing the energy for active transport of various nutrients. Could also be part of an osmosensory signaling pathway that senses body-fluid sodium levels and controls salt intake behavior as well as voluntary water intake to regulate sodium homeostasis. This is Sodium/potassium-transporting ATPase subunit alpha-1 (ATP1A1) from Homo sapiens (Human).